We begin with the raw amino-acid sequence, 302 residues long: Sulfate adenylyltransferase subunit 2 (302 aa).

This sequence belongs to the PAPS reductase family. CysD subfamily. Heterodimer composed of CysD, the smaller subunit, and CysN.

The enzyme catalyses sulfate + ATP + H(+) = adenosine 5'-phosphosulfate + diphosphate. It functions in the pathway sulfur metabolism; hydrogen sulfide biosynthesis; sulfite from sulfate: step 1/3. Its function is as follows. With CysN forms the ATP sulfurylase (ATPS) that catalyzes the adenylation of sulfate producing adenosine 5'-phosphosulfate (APS) and diphosphate, the first enzymatic step in sulfur assimilation pathway. APS synthesis involves the formation of a high-energy phosphoric-sulfuric acid anhydride bond driven by GTP hydrolysis by CysN coupled to ATP hydrolysis by CysD. In Salmonella agona (strain SL483), this protein is Sulfate adenylyltransferase subunit 2.